Reading from the N-terminus, the 687-residue chain is Fatty acid oxidation complex subunit alpha (687 aa).

Positions 1–191 are enoyl-CoA hydratase; that stretch reads MKNTSAFAWT…KLGVVDASVP (191 aa). A 3-hydroxyacyl-CoA dehydrogenase region spans residues 307-687; that stretch reads KSIDYVGVLG…ADKYGDRFIE (381 aa).

It in the N-terminal section; belongs to the enoyl-CoA hydratase/isomerase family. This sequence in the central section; belongs to the 3-hydroxyacyl-CoA dehydrogenase family. Heterotetramer of two alpha chains (FadJ) and two beta chains (FadI).

It is found in the cytoplasm. The catalysed reaction is a (3S)-3-hydroxyacyl-CoA = a (2E)-enoyl-CoA + H2O. The enzyme catalyses a 4-saturated-(3S)-3-hydroxyacyl-CoA = a (3E)-enoyl-CoA + H2O. It catalyses the reaction a (3S)-3-hydroxyacyl-CoA + NAD(+) = a 3-oxoacyl-CoA + NADH + H(+). It carries out the reaction (3S)-3-hydroxybutanoyl-CoA = (3R)-3-hydroxybutanoyl-CoA. The protein operates within lipid metabolism; fatty acid beta-oxidation. Its function is as follows. Catalyzes the formation of a hydroxyacyl-CoA by addition of water on enoyl-CoA. Also exhibits 3-hydroxyacyl-CoA epimerase and 3-hydroxyacyl-CoA dehydrogenase activities. This is Fatty acid oxidation complex subunit alpha from Aliivibrio fischeri (strain ATCC 700601 / ES114) (Vibrio fischeri).